A 286-amino-acid chain; its full sequence is Mycolic acid methyltransferase MmaA1 (286 aa).

S-adenosyl-L-methionine is bound by residues 32–33, 71–73, 93–98, and 122–123; these read YT, GCG, TLSRNH, and WE. The active site involves Cys-268.

Belongs to the CFA/CMAS family.

The protein operates within lipid metabolism; mycolic acid biosynthesis. Involved in the conversion of a cis-olefin into a trans-olefin with concomitant introduction of an allylic methyl branch at the proximal position of the precursor to both the methoxy and ketomycolic acids. It directly affects the cis- to trans ratio and indirectly affects the keto to methoxy ratio. The chain is Mycolic acid methyltransferase MmaA1 (cmaD) from Mycobacterium bovis (strain ATCC BAA-935 / AF2122/97).